We begin with the raw amino-acid sequence, 149 residues long: uncharacterized protein (149 aa).

Positions 130 to 144 are enriched in basic and acidic residues; that stretch reads ESNVTKENIEIKEEK. Residues 130–149 form a disordered region; sequence ESNVTKENIEIKEEKEENSE.

This is an uncharacterized protein from Methanocaldococcus jannaschii (strain ATCC 43067 / DSM 2661 / JAL-1 / JCM 10045 / NBRC 100440) (Methanococcus jannaschii).